Here is a 213-residue protein sequence, read N- to C-terminus: MHQQKRQPELVEGNLPVFVFPTELIFYADDQSTHKQVLTLYNPYEFALKFKVLCTTPNKYVVVDAAGAVKPQCCVDIVIRHRDVRSCHYGVIDKFRLQVSEQSQRKALGRKEVIATLLPSAKEQQKEEEEKRIKEHLTESVFFEQSCQPENRAVSSGPSLLTVFLGVVCIAALMLPTLGDMESLVPLYLHLSVNQKLVAAYILGLITMAILRT.

The MSP domain maps to 16–143 (PVFVFPTELI…KEHLTESVFF (128 aa)). 2 helical membrane passes run 159–179 (SLLT…PTLG) and 191–211 (LSVN…MAIL). A Nuclear export signal motif is present at residues 205–208 (LITM).

Widely expressed. Shows highest expression in ribs, and slightly lower levels of expression in heart, kidney, muscle, thymus, calvariae and lung. Also detected at low levels in spleen and liver.

The protein localises to the endoplasmic reticulum membrane. Its subcellular location is the golgi apparatus membrane. Functionally, plays a role in differentiation and/or proliferation of mesenchymal stem cells. Proposed to be involved in epithelial-to-mesenchymal transition (EMT). However, another study suggests that it is not required for EMT or stem cell self-renewal and acts during later stages of differentiation. The polypeptide is Motile sperm domain-containing protein 1 (Mospd1) (Mus musculus (Mouse)).